The following is a 183-amino-acid chain: Ribosome maturation factor RimM (183 aa).

The PRC barrel domain maps to 104 to 183; the sequence is EGDYYWKDLM…TIEVDWDPGF (80 aa).

Belongs to the RimM family. In terms of assembly, binds ribosomal protein uS19.

The protein resides in the cytoplasm. Its function is as follows. An accessory protein needed during the final step in the assembly of 30S ribosomal subunit, possibly for assembly of the head region. Essential for efficient processing of 16S rRNA. May be needed both before and after RbfA during the maturation of 16S rRNA. It has affinity for free ribosomal 30S subunits but not for 70S ribosomes. The chain is Ribosome maturation factor RimM from Salmonella choleraesuis (strain SC-B67).